The following is a 651-amino-acid chain: DNA mismatch repair protein MutL (651 aa).

A disordered region spans residues 336 to 398; it reads RLDMTEPETG…ANSGYQPENP (63 aa). Polar residues predominate over residues 385–394; the sequence is ARESANSGYQ.

Belongs to the DNA mismatch repair MutL/HexB family.

In terms of biological role, this protein is involved in the repair of mismatches in DNA. It is required for dam-dependent methyl-directed DNA mismatch repair. May act as a 'molecular matchmaker', a protein that promotes the formation of a stable complex between two or more DNA-binding proteins in an ATP-dependent manner without itself being part of a final effector complex. The polypeptide is DNA mismatch repair protein MutL (Pectobacterium atrosepticum (strain SCRI 1043 / ATCC BAA-672) (Erwinia carotovora subsp. atroseptica)).